We begin with the raw amino-acid sequence, 277 residues long: Urease accessory protein UreD (277 aa).

Belongs to the UreD family. As to quaternary structure, ureD, UreF and UreG form a complex that acts as a GTP-hydrolysis-dependent molecular chaperone, activating the urease apoprotein by helping to assemble the nickel containing metallocenter of UreC. The UreE protein probably delivers the nickel.

The protein localises to the cytoplasm. Functionally, required for maturation of urease via the functional incorporation of the urease nickel metallocenter. The protein is Urease accessory protein UreD of Yersinia pestis (strain Pestoides F).